We begin with the raw amino-acid sequence, 161 residues long: Small ribosomal subunit protein uS9 (161 aa).

Positions 1–21 are enriched in polar residues; it reads MATLQSLADLNRANTQTSNPE. Residues 1–25 form a disordered region; that stretch reads MATLQSLADLNRANTQTSNPENEAP.

It belongs to the universal ribosomal protein uS9 family.

The protein is Small ribosomal subunit protein uS9 of Methylorubrum populi (strain ATCC BAA-705 / NCIMB 13946 / BJ001) (Methylobacterium populi).